We begin with the raw amino-acid sequence, 339 residues long: DNA-directed RNA polymerase subunit alpha (339 aa).

Positions 1–235 are alpha N-terminal domain (alpha-NTD); that stretch reads MVIQKNWQEL…DQLQIFVNFE (235 aa). The alpha C-terminal domain (alpha-CTD) stretch occupies residues 251–339; sequence FNPALLKKVD…DLAKRFEEHY (89 aa).

This sequence belongs to the RNA polymerase alpha chain family. Homodimer. The RNAP catalytic core consists of 2 alpha, 1 beta, 1 beta' and 1 omega subunit. When a sigma factor is associated with the core the holoenzyme is formed, which can initiate transcription.

The catalysed reaction is RNA(n) + a ribonucleoside 5'-triphosphate = RNA(n+1) + diphosphate. Functionally, DNA-dependent RNA polymerase catalyzes the transcription of DNA into RNA using the four ribonucleoside triphosphates as substrates. This Methylobacterium sp. (strain 4-46) protein is DNA-directed RNA polymerase subunit alpha.